The following is a 338-amino-acid chain: Glyceraldehyde-3-phosphate dehydrogenase (338 aa).

NAD(+)-binding positions include 12-13 (RI), Asp-34, and Arg-79. D-glyceraldehyde 3-phosphate is bound by residues 150-152 (SCT), Thr-181, 210-211 (TG), and Arg-233. The active-site Nucleophile is the Cys-151. Residue Asn-316 participates in NAD(+) binding.

This sequence belongs to the glyceraldehyde-3-phosphate dehydrogenase family. In terms of assembly, homotetramer.

Its subcellular location is the cytoplasm. It catalyses the reaction D-glyceraldehyde 3-phosphate + phosphate + NAD(+) = (2R)-3-phospho-glyceroyl phosphate + NADH + H(+). It functions in the pathway carbohydrate degradation; glycolysis; pyruvate from D-glyceraldehyde 3-phosphate: step 1/5. The polypeptide is Glyceraldehyde-3-phosphate dehydrogenase (GPD) (Phaffia rhodozyma (Yeast)).